The primary structure comprises 460 residues: L-seryl-tRNA(Sec) selenium transferase (460 aa).

Lysine 293 is subject to N6-(pyridoxal phosphate)lysine.

This sequence belongs to the SelA family. Pyridoxal 5'-phosphate serves as cofactor.

It is found in the cytoplasm. It carries out the reaction L-seryl-tRNA(Sec) + selenophosphate + H(+) = L-selenocysteinyl-tRNA(Sec) + phosphate. It participates in aminoacyl-tRNA biosynthesis; selenocysteinyl-tRNA(Sec) biosynthesis; selenocysteinyl-tRNA(Sec) from L-seryl-tRNA(Sec) (bacterial route): step 1/1. Its function is as follows. Converts seryl-tRNA(Sec) to selenocysteinyl-tRNA(Sec) required for selenoprotein biosynthesis. The polypeptide is L-seryl-tRNA(Sec) selenium transferase (Haemophilus ducreyi (strain 35000HP / ATCC 700724)).